A 127-amino-acid polypeptide reads, in one-letter code: MRHYEIVFIVHPDQSEQVPAMIERYRANIAARGGNVHRLEDWGRRQMAYPIQKVHKAHYVLMNIECDQETLEELEHGFKFNDAVLRHLTIKRDAAVTAASPMMKEEKARDLLQGAKADAPAEQPAAA.

The disordered stretch occupies residues 101–127 (PMMKEEKARDLLQGAKADAPAEQPAAA). Positions 115-127 (AKADAPAEQPAAA) are enriched in low complexity.

The protein belongs to the bacterial ribosomal protein bS6 family.

Its function is as follows. Binds together with bS18 to 16S ribosomal RNA. The chain is Small ribosomal subunit protein bS6 from Thiobacillus denitrificans (strain ATCC 25259 / T1).